Here is a 430-residue protein sequence, read N- to C-terminus: T-kininogen 2 (430 aa).

The first 18 residues, 1–18 (MKLITILLLCSRLLPSLA), serve as a signal peptide directing secretion. Glutamine 19 is modified (pyrrolidone carboxylic acid). The region spanning 28–131 (CNDETVFQAV…TQICNITPGK (104 aa)) is the Cystatin kininogen-type 1 domain. Disulfide bonds link cysteine 28–cysteine 404, cysteine 83–cysteine 94, cysteine 107–cysteine 125, cysteine 141–cysteine 144, cysteine 205–cysteine 217, cysteine 228–cysteine 247, cysteine 263–cysteine 266, cysteine 327–cysteine 339, and cysteine 350–cysteine 369. An N-linked (GlcNAc...) asparagine glycan is attached at asparagine 82. One can recognise a Cystatin kininogen-type 2 domain in the interval 150–253 (MDSSDLKPVL…SQSCDLYPGD (104 aa)). N-linked (GlcNAc...) asparagine glycans are attached at residues asparagine 168 and asparagine 204. The region spanning 272-375 (VDSPELKEAL…TVRCQALDMM (104 aa)) is the Cystatin kininogen-type 3 domain. The N-linked (GlcNAc...) asparagine glycan is linked to asparagine 326. Positions 410–430 (LSKAGAGPAPDHQAEASTVTP) are disordered.

As T-kinin is preceded by a Met instead of an Arg or Lys, it is not released from its precursor by either tissue or plasma kallikrein. As to expression, plasma.

The protein resides in the secreted. Its subcellular location is the extracellular space. In terms of biological role, kininogens are plasma glycoproteins with a number of functions: (1) as precursor of the active peptide bradykinin they effect smooth muscle contraction, induction of hypotension and increase of vascular permeability. (2) They play a role in blood coagulation by helping to position optimally prekallikrein and factor XI next to factor XII. (3) They are inhibitor of thiol proteases. The sequence is that of T-kininogen 2 from Rattus norvegicus (Rat).